The chain runs to 204 residues: Holliday junction branch migration complex subunit RuvA (204 aa).

The domain I stretch occupies residues 1–64; it reads MIGRLRGIIL…EDAQLLYGFN (64 aa). The tract at residues 65–142 is domain II; that stretch reads NKQERALFRE…KGLNGDLFNN (78 aa). Residues 143–155 are flexible linker; it reads TGDISLPTASPQT. The tract at residues 156-204 is domain III; sequence SDADIEAEAASALVALGYKPQEASRLVSKIAKPGADCETLIRDALRAAL.

Belongs to the RuvA family. Homotetramer. Forms an RuvA(8)-RuvB(12)-Holliday junction (HJ) complex. HJ DNA is sandwiched between 2 RuvA tetramers; dsDNA enters through RuvA and exits via RuvB. An RuvB hexamer assembles on each DNA strand where it exits the tetramer. Each RuvB hexamer is contacted by two RuvA subunits (via domain III) on 2 adjacent RuvB subunits; this complex drives branch migration. In the full resolvosome a probable DNA-RuvA(4)-RuvB(12)-RuvC(2) complex forms which resolves the HJ.

The protein resides in the cytoplasm. Its function is as follows. The RuvA-RuvB-RuvC complex processes Holliday junction (HJ) DNA during genetic recombination and DNA repair, while the RuvA-RuvB complex plays an important role in the rescue of blocked DNA replication forks via replication fork reversal (RFR). RuvA specifically binds to HJ cruciform DNA, conferring on it an open structure. The RuvB hexamer acts as an ATP-dependent pump, pulling dsDNA into and through the RuvAB complex. HJ branch migration allows RuvC to scan DNA until it finds its consensus sequence, where it cleaves and resolves the cruciform DNA. The chain is Holliday junction branch migration complex subunit RuvA from Yersinia pseudotuberculosis serotype O:1b (strain IP 31758).